The following is a 483-amino-acid chain: NADPH:adrenodoxin oxidoreductase, mitochondrial (483 aa).

The transit peptide at 1-14 (MSRYLARYMVSRYF) directs the protein to the mitochondrion. 4 residues coordinate FAD: Ala-32, Asp-53, Leu-61, and Leu-97. Residues 169 to 172 (QGNV), 213 to 214 (RR), and Glu-225 contribute to the NADP(+) site. FAD contacts are provided by residues Trp-391 and 398–400 (GII). Residue Gly-398 participates in NADP(+) binding.

This sequence belongs to the ferredoxin--NADP reductase type 1 family. It depends on FAD as a cofactor.

The protein resides in the mitochondrion. The catalysed reaction is 2 reduced [adrenodoxin] + NADP(+) + H(+) = 2 oxidized [adrenodoxin] + NADPH. Its function is as follows. Associates in vitro with the adrenodoxin-like protein MFDX1 to form an efficient low potential electron transfer chain that is able to reduce cytochrome C. Functions as accessory mitochondrial protein involved with BIO2 in the plant biotin synthase reaction. The polypeptide is NADPH:adrenodoxin oxidoreductase, mitochondrial (Arabidopsis thaliana (Mouse-ear cress)).